We begin with the raw amino-acid sequence, 59 residues long: Conotoxin ViVB (59 aa).

A signal peptide spans 1–22 (MRCVPVFIILLLLIPSAPSAAV). Positions 23–46 (QPKTEKDDVPLASFHDSAMRILSR) are excised as a propeptide. The residue at position 47 (glutamine 47) is a Pyrrolidone carboxylic acid. Valine 58 carries the post-translational modification Valine amide.

Contains 2 disulfide bonds that can be either 'C1-C3, C2-C4' or 'C1-C4, C2-C3', since these disulfide connectivities have been observed for conotoxins with cysteine framework V (for examples, see AC P0DQQ7 and AC P81755). As to expression, expressed by the venom duct.

The protein resides in the secreted. The sequence is that of Conotoxin ViVB from Conus virgo (Virgin cone).